Reading from the N-terminus, the 161-residue chain is Phosphopantetheine adenylyltransferase (161 aa).

A substrate-binding site is contributed by Thr10. Residues 10-11 (TF) and His18 each bind ATP. Residues Lys42, Leu74, and Arg88 each contribute to the substrate site. Residues 89–91 (GLR), Glu99, and 124–130 (NSFISST) contribute to the ATP site.

Belongs to the bacterial CoaD family. As to quaternary structure, homohexamer. The cofactor is Mg(2+).

The protein localises to the cytoplasm. The catalysed reaction is (R)-4'-phosphopantetheine + ATP + H(+) = 3'-dephospho-CoA + diphosphate. The protein operates within cofactor biosynthesis; coenzyme A biosynthesis; CoA from (R)-pantothenate: step 4/5. Functionally, reversibly transfers an adenylyl group from ATP to 4'-phosphopantetheine, yielding dephospho-CoA (dPCoA) and pyrophosphate. The protein is Phosphopantetheine adenylyltransferase of Photobacterium profundum (strain SS9).